A 343-amino-acid chain; its full sequence is 3-dehydroquinate synthase (343 aa).

Residues 86 to 90, 110 to 111, Lys123, and Lys132 contribute to the NAD(+) site; these read GALLD and TT. Zn(2+) contacts are provided by Glu165, His229, and His243.

Belongs to the sugar phosphate cyclases superfamily. Dehydroquinate synthase family. The cofactor is Co(2+). Zn(2+) serves as cofactor. NAD(+) is required as a cofactor.

It localises to the cytoplasm. The enzyme catalyses 7-phospho-2-dehydro-3-deoxy-D-arabino-heptonate = 3-dehydroquinate + phosphate. It participates in metabolic intermediate biosynthesis; chorismate biosynthesis; chorismate from D-erythrose 4-phosphate and phosphoenolpyruvate: step 2/7. Functionally, catalyzes the conversion of 3-deoxy-D-arabino-heptulosonate 7-phosphate (DAHP) to dehydroquinate (DHQ). The protein is 3-dehydroquinate synthase of Pyrobaculum neutrophilum (strain DSM 2338 / JCM 9278 / NBRC 100436 / V24Sta) (Thermoproteus neutrophilus).